The sequence spans 264 residues: Thymidylate synthase (264 aa).

Arg-21 is a binding site for dUMP. (6R)-5,10-methylene-5,6,7,8-tetrahydrofolate is bound at residue His-51. Position 126-127 (126-127 (RR)) interacts with dUMP. The Nucleophile role is filled by Cys-146. DUMP is bound by residues 166–169 (RSAD), Asn-177, and 207–209 (HIY). (6R)-5,10-methylene-5,6,7,8-tetrahydrofolate is bound at residue Asp-169. Residue Ala-263 participates in (6R)-5,10-methylene-5,6,7,8-tetrahydrofolate binding.

The protein belongs to the thymidylate synthase family. Bacterial-type ThyA subfamily. Homodimer.

The protein localises to the cytoplasm. It catalyses the reaction dUMP + (6R)-5,10-methylene-5,6,7,8-tetrahydrofolate = 7,8-dihydrofolate + dTMP. It participates in pyrimidine metabolism; dTTP biosynthesis. Catalyzes the reductive methylation of 2'-deoxyuridine-5'-monophosphate (dUMP) to 2'-deoxythymidine-5'-monophosphate (dTMP) while utilizing 5,10-methylenetetrahydrofolate (mTHF) as the methyl donor and reductant in the reaction, yielding dihydrofolate (DHF) as a by-product. This enzymatic reaction provides an intracellular de novo source of dTMP, an essential precursor for DNA biosynthesis. This chain is Thymidylate synthase, found in Methylobacillus flagellatus (strain ATCC 51484 / DSM 6875 / VKM B-1610 / KT).